A 75-amino-acid chain; its full sequence is Large ribosomal subunit protein bL31 (75 aa).

The protein belongs to the bacterial ribosomal protein bL31 family. Type A subfamily. As to quaternary structure, part of the 50S ribosomal subunit.

Functionally, binds the 23S rRNA. The polypeptide is Large ribosomal subunit protein bL31 (Zymomonas mobilis subsp. mobilis (strain ATCC 31821 / ZM4 / CP4)).